The following is a 1941-amino-acid chain: Myosin light chain kinase, smooth muscle (1941 aa).

2 Ig-like C2-type domains span residues proline 33–threonine 122 and proline 156–serine 244. Cysteine 177 and cysteine 228 are oxidised to a cystine. At tyrosine 226 the chain carries Phosphotyrosine; by ABL1. Residues alanine 255–glutamine 329 form a disordered region. A compositionally biased stretch (polar residues) spans asparagine 286–lysine 305. At serine 295 the chain carries Phosphoserine. The span at serine 306 to arginine 320 shows a compositional bias: basic and acidic residues. Phosphoserine occurs at positions 333 and 355. 4 consecutive Ig-like C2-type domains span residues proline 402–serine 485, proline 502–threonine 587, proline 611–threonine 699, and proline 709–arginine 809. Intrachain disulfides connect cysteine 423–cysteine 475 and cysteine 523–cysteine 571. At tyrosine 452 the chain carries Phosphotyrosine; by ABL1 and SRC. An intrachain disulfide couples cysteine 730 to cysteine 793. A Phosphotyrosine; by ABL1 modification is found at tyrosine 780. 4 repeat units span residues aspartate 856–leucine 883, aspartate 884–methionine 911, aspartate 912–valine 939, and aspartate 940–proline 966. The segment at aspartate 856 to asparagine 985 is 5 X 28 AA approximate tandem repeats. Residues methionine 911–proline 951 form an actin-binding (calcium/calmodulin-sensitive) region. The interval glutamine 920–proline 1120 is disordered. Position 935 is a phosphoserine (serine 935). Residues proline 936–proline 951 form a calmodulin-binding region. One copy of the 1-5; truncated repeat lies at aspartate 967–asparagine 985. Tandem repeats lie at residues leucine 990–glycine 1002, aspartate 1003–glycine 1014, asparagine 1015–glycine 1026, asparagine 1027–glycine 1038, and asparagine 1039–isoleucine 1049. Residues leucine 990 to isoleucine 1049 are 5 X 12 AA approximate tandem repeats. Residues proline 1048–valine 1482 are actin-binding (calcium/calmodulin-insensitive). Polar residues predominate over residues alanine 1052 to glutamine 1065. Over residues alanine 1085 to cysteine 1099 the composition is skewed to basic and acidic residues. The region spanning proline 1120–threonine 1208 is the Ig-like C2-type 7 domain. Residues cysteine 1141 and cysteine 1192 are joined by a disulfide bond. Residues alanine 1212–alanine 1257 are disordered. The Ig-like C2-type 8 domain maps to proline 1260–threonine 1348. A Fibronectin type-III domain is found at proline 1356 to lysine 1449. The segment at serine 1435–valine 1469 is disordered. Residues proline 1453 to proline 1467 show a composition bias toward acidic residues. Phosphoserine is present on serine 1460. Tyrosine 1471 carries the phosphotyrosine; by ABL1 modification. The 256-residue stretch at tyrosine 1486 to leucine 1741 folds into the Protein kinase domain. Residues leucine 1492–valine 1500 and lysine 1515 each bind ATP. Tyrosine 1597 is modified (phosphotyrosine; by ABL1). Aspartate 1607 serves as the catalytic Proton acceptor. Tyrosine 1657 bears the Phosphotyrosine; by ABL1 mark. Residues threonine 1733–threonine 1796 are calmodulin-binding. Residues serine 1781, serine 1782, serine 1794, serine 1795, and serine 1798 each carry the phosphoserine modification. The tract at residues leucine 1789–glutamate 1809 is disordered. Over residues arginine 1792–isoleucine 1803 the composition is skewed to polar residues. Threonine 1800 bears the Phosphothreonine mark. Serine 1801 is modified (phosphoserine). The region spanning proline 1831–isoleucine 1920 is the Ig-like C2-type 9 domain. An intrachain disulfide couples cysteine 1852 to cysteine 1904.

Belongs to the protein kinase superfamily. CAMK Ser/Thr protein kinase family. As to quaternary structure, all isoforms including Telokin bind calmodulin. Interacts with CTTN; this interaction is reduced during thrombin-induced endothelial cell (EC) contraction but is promoted by the barrier-protective agonist sphingosine 1-phosphate (S1P) within lamellipodia. A complex made of ABL1, CTTN and MYLK regulates cortical actin-based cytoskeletal rearrangement critical to sphingosine 1-phosphate (S1P)-mediated endothelial cell (EC) barrier enhancement. Binds to NAA10/ARD1. Interacts with SVIL and PTK2B/PYK2. Mg(2+) is required as a cofactor. The cofactor is Ca(2+). In terms of processing, can probably be down-regulated by phosphorylation. Tyrosine phosphorylation by ABL1 increases kinase activity, reverses MLCK-mediated inhibition of Arp2/3-mediated actin polymerization, and enhances CTTN-binding. Phosphorylation by SRC at Tyr-452 promotes CTTN binding. The C-terminus is deglutamylated by AGTPBP1/CCP1, AGBL1/CCP4 and AGBL4/CCP6, leading to the formation of Myosin light chain kinase, smooth muscle, deglutamylated form. The consequences of C-terminal deglutamylation are unknown. As to expression, smooth muscle isoform is expressed in all tissues with highest levels in bladder, uterus, vas deferens, colon, ileum, and tracheae. Isoform 1 is expressed in lung, bladder, and vas deferens. Telokin is expressed in smooth muscle cells of the gut, reproductive tract and urinary tract, including in uterus, vas deferens, bladder, colon, kidney, ureter and ovary. Telokin is also detected in the trachea.

The protein localises to the cytoplasm. Its subcellular location is the cell projection. It is found in the lamellipodium. The protein resides in the cleavage furrow. It localises to the cytoskeleton. The protein localises to the stress fiber. It catalyses the reaction L-seryl-[myosin light chain] + ATP = O-phospho-L-seryl-[myosin light chain] + ADP + H(+). The catalysed reaction is L-threonyl-[myosin light chain] + ATP = O-phospho-L-threonyl-[myosin light chain] + ADP + H(+). Its function is as follows. Calcium/calmodulin-dependent myosin light chain kinase implicated in smooth muscle contraction via phosphorylation of myosin light chains (MLC). Also regulates actin-myosin interaction through a non-kinase activity. Phosphorylates PTK2B/PYK2 and myosin light-chains. Involved in the inflammatory response (e.g. apoptosis, vascular permeability, leukocyte diapedesis), cell motility and morphology, airway hyperreactivity and other activities relevant to asthma. Required for tonic airway smooth muscle contraction that is necessary for physiological and asthmatic airway resistance. Necessary for gastrointestinal motility. Implicated in the regulation of endothelial as well as vascular permeability, probably via the regulation of cytoskeletal rearrangements. In the nervous system it has been shown to control the growth initiation of astrocytic processes in culture and to participate in transmitter release at synapses formed between cultured sympathetic ganglion cells. Critical participant in signaling sequences that result in fibroblast apoptosis. Plays a role in the regulation of epithelial cell survival. Required for epithelial wound healing, especially during actomyosin ring contraction during purse-string wound closure. Mediates RhoA-dependent membrane blebbing. Triggers TRPC5 channel activity in a calcium-dependent signaling, by inducing its subcellular localization at the plasma membrane. Promotes cell migration (including tumor cells) and tumor metastasis. PTK2B/PYK2 activation by phosphorylation mediates ITGB2 activation and is thus essential to trigger neutrophil transmigration during acute lung injury (ALI). May regulate optic nerve head astrocyte migration. Probably involved in mitotic cytoskeletal regulation. Regulates tight junction probably by modulating ZO-1 exchange in the perijunctional actomyosin ring. Mediates burn-induced microvascular barrier injury; triggers endothelial contraction in the development of microvascular hyperpermeability by phosphorylating MLC. Essential for intestinal barrier dysfunction. Mediates Giardia spp.-mediated reduced epithelial barrier function during giardiasis intestinal infection via reorganization of cytoskeletal F-actin and tight junctional ZO-1. Necessary for hypotonicity-induced Ca(2+) entry and subsequent activation of volume-sensitive organic osmolyte/anion channels (VSOAC) in cervical cancer cells. The sequence is that of Myosin light chain kinase, smooth muscle from Mus musculus (Mouse).